Reading from the N-terminus, the 2065-residue chain is Cytoskeleton-associated protein 5-A (2065 aa).

2 TOG regions span residues 1 to 240 (MGDD…DLKA) and 264 to 515 (VDAY…KETK). HEAT repeat units follow at residues 120 to 157 (EKAE…EFGS), 160 to 197 (MTLK…WIRD), 270 to 311 (LEAV…NPKI), 314 to 352 (GDFA…GLRK), 356 to 393 (SYAG…TTTL), 395 to 432 (NISE…STLP), and 436 to 477 (LKPF…VNPF). The interval 500–574 (NGKKGGAAAG…GATAKGKKAV (75 aa)) is disordered. Residues 538 to 568 (KAAAAPKKAPAAKPGGPVKKAKAPASSGATA) are compositionally biased toward low complexity. The interval 644-808 (KPGFKETNFQ…LSQIDAEFEK (165 aa)) is TOG 3. 2 HEAT repeats span residues 652 to 689 (FQVM…KVGD) and 748 to 785 (INVK…YMGA). Positions 809–849 (MKGQTPPVSIRGSKHGSGRDEGEEGEEQDEDAPADVTDLLP) are disordered. Residues 829–841 (EGEEGEEQDEDAP) are compositionally biased toward acidic residues. The segment at 846 to 1090 (DLLPRTDISD…AGPPGKASSK (245 aa)) is TOG 4. HEAT repeat units lie at residues 852–889 (DISD…EAKF), 892–929 (PSIG…AMGH), 933–970 (QHVK…QTGM), and 1015–1052 (CVPY…KMSK). The span at 1074–1115 (ASMPAKPAGPPGKASSKQPPAVAQASASPPPAASSDSGSSTS) shows a compositional bias: low complexity. The tract at residues 1074-1192 (ASMPAKPAGP…AKDEEDKSGP (119 aa)) is disordered. The span at 1126–1163 (PGTQASKAKTQSVSSEGNTSLNPSNTSLTPSKANTSLS) shows a compositional bias: polar residues. Residues 1150–1235 (NTSLTPSKAN…IEQLKTQMSP (86 aa)) are interaction with microtubule lattice. The tract at residues 1191–1460 (GPIYIIVPNG…ERIKRAGKKQ (270 aa)) is TOG 5. HEAT repeat units lie at residues 1251-1288 (QRQI…RFFD), 1295-1318 (MKCL…LTEM), 1319-1355 (EGTS…VYPA), 1357-1390 (KMFN…SYGM), and 1395-1432 (PTPA…VHGE). Disordered regions lie at residues 1982 to 2001 (DNAK…KSSA) and 2028 to 2065 (VELD…SSRK). The tract at residues 2002–2065 (PAVVSSTDML…RLERIKSSRK (64 aa)) is interaction with tacc3. Residues 2038–2048 (STTTSSSASST) are compositionally biased toward low complexity. The segment covering 2051-2065 (DDLKKRLERIKSSRK) has biased composition (basic and acidic residues).

It belongs to the TOG/XMAP215 family. In terms of assembly, interacts with tacc3; two molecules of ckap5 interact with 1 molecule of tacc3 probably mediated by coiled coil domains forming a four-helix bundle. Interacts with tacc3 and clathrin forming the TACC3/ch-TOG/clathrin complex located at spindle inter-microtubules bridges. Interacts with ndc80; indicative for an association with the NDC80 comnplex.

It is found in the cytoplasm. The protein resides in the cytoskeleton. The protein localises to the spindle pole. Its subcellular location is the spindle. It localises to the microtubule organizing center. It is found in the centrosome. The protein resides in the chromosome. The protein localises to the centromere. Its subcellular location is the kinetochore. Its function is as follows. Binds to the plus end of microtubules and regulates microtubule dynamics and microtubule organization. Acts as a processive microtubule polymerase. Promotes cytoplasmic microtubule nucleation and elongation. Plays a major role in organizing spindle poles. In spindle formation protects kinetochore microtubules from depolymerization by kif2c and has an essential role in centrosomal microtubule assembly independently of kif2c activity. Contributes to centrosome integrity. Acts as a component of the TACC3/ch-TOG/clathrin complex proposed to contribute to stabilization of kinetochore fibers of the mitotic spindle by acting as inter-microtubule bridge. Enhances the strength of NDC80 complex-mediated kinetochore-tip microtubule attachments. The protein is Cytoskeleton-associated protein 5-A (ckap5-a) of Xenopus laevis (African clawed frog).